The chain runs to 400 residues: 2-octaprenylphenol hydroxylase (400 aa).

Residues 49–52 (RVSA) and 297–303 (LAGQGVN) contribute to the FAD site.

The protein belongs to the UbiH/COQ6 family. In terms of assembly, homotetramer. Component of the Ubi complex metabolon, which regroups five ubiquinone biosynthesis proteins (UbiE, UbiF, UbiG, UbiH and UbiI) and two accessory factors (UbiK and the lipid-binding protein UbiJ). It depends on FAD as a cofactor.

The protein resides in the cytoplasm. It catalyses the reaction 2-all-trans-octaprenylphenol + NADPH + O2 + H(+) = 3-(all-trans-octaprenyl)benzene-1,2-diol + NADP(+) + H2O. The enzyme catalyses a 2-(all-trans-polyprenyl)phenol + NADPH + O2 + H(+) = a 3-(all-trans-polyprenyl)benzene-1,2-diol + NADP(+) + H2O. The protein operates within cofactor biosynthesis; ubiquinone biosynthesis. Its function is as follows. FAD-dependent monooxygenase required for the aerobic hydroxylation of 2-octaprenylphenol to 2-octaprenyl-6-hydroxy-phenol, the first hydroxylation step in coenzyme Q (ubiquinone) biosynthesis. In Escherichia coli (strain K12), this protein is 2-octaprenylphenol hydroxylase.